The sequence spans 172 residues: Small ribosomal subunit protein uS5 (172 aa).

The S5 DRBM domain maps to 15–78; sequence YIEKLVNIRR…DKARKRMKSV (64 aa).

It belongs to the universal ribosomal protein uS5 family. Part of the 30S ribosomal subunit. Contacts proteins S4 and S8.

With S4 and S12 plays an important role in translational accuracy. Functionally, located at the back of the 30S subunit body where it stabilizes the conformation of the head with respect to the body. In Ruthia magnifica subsp. Calyptogena magnifica, this protein is Small ribosomal subunit protein uS5.